The chain runs to 430 residues: CC-adding tRNA nucleotidyltransferase (430 aa).

Residue 33 to 36 (GCVR) coordinates CTP. Mg(2+)-binding residues include aspartate 46 and aspartate 48. Residues 108 to 109 (RD), asparagine 113, 150 to 159 (DPLRIVRAYR), and arginine 190 contribute to the CTP site.

It belongs to the tRNA nucleotidyltransferase/poly(A) polymerase family. The cofactor is Mg(2+).

It catalyses the reaction a tRNA precursor + 2 CTP = a tRNA with a 3' CC end + 2 diphosphate. TRNA nucleotidyltransferase involved in the synthesis of the tRNA CCA terminus. Adds the two cytidine residues to tRNA. The sequence is that of CC-adding tRNA nucleotidyltransferase from Geobacter sulfurreducens (strain ATCC 51573 / DSM 12127 / PCA).